The following is a 127-amino-acid chain: Ribosome-binding factor A (127 aa).

It belongs to the RbfA family. As to quaternary structure, monomer. Binds 30S ribosomal subunits, but not 50S ribosomal subunits or 70S ribosomes.

It localises to the cytoplasm. In terms of biological role, one of several proteins that assist in the late maturation steps of the functional core of the 30S ribosomal subunit. Associates with free 30S ribosomal subunits (but not with 30S subunits that are part of 70S ribosomes or polysomes). Required for efficient processing of 16S rRNA. May interact with the 5'-terminal helix region of 16S rRNA. The chain is Ribosome-binding factor A from Stenotrophomonas maltophilia (strain K279a).